The sequence spans 369 residues: Probable methyltransferase TCM_000331 (369 aa).

The S-adenosyl-L-homocysteine site is built by tyrosine 18, cysteine 60, asparagine 65, aspartate 98, leucine 99, serine 137, and phenylalanine 138. Mg(2+)-binding residues include asparagine 176, aspartate 261, phenylalanine 263, and asparagine 264.

The protein belongs to the methyltransferase superfamily. Type-7 methyltransferase family. Mg(2+) is required as a cofactor.

The chain is Probable methyltransferase TCM_000331 from Theobroma cacao (Cacao).